The following is a 150-amino-acid chain: Histone H3-like centromeric protein A (150 aa).

Positions 1–56 are disordered; it reads MRPGSTPASRRKSRPPRRVSPPLPTTSTRSPGRPSAPEQRKAPRATPKKRFRPGTR. Over residues 25–37 the composition is skewed to low complexity; the sequence is TTSTRSPGRPSAP. Over residues 42–53 the composition is skewed to basic residues; sequence APRATPKKRFRP. The segment at 53–150 is H3-like; that stretch reads PGTRALMEIR…RIRGVTEGLG (98 aa).

The protein belongs to the histone H3 family. As to quaternary structure, component of centromeric nucleosomes, where DNA is wrapped around a histone octamer core. The octamer contains two molecules each of H2A, H2B, CENPA and H4 assembled in one CENPA-H4 heterotetramer and two H2A-H2B heterodimers. CENPA modulates the DNA-binding characteristics of nucleosomes so that protruding DNA ends have higher flexibility than in nucleosomes containing conventional histone H3.

The protein localises to the nucleus. The protein resides in the chromosome. Its subcellular location is the centromere. Histone H3-like nucleosomal protein that is specifically found in centromeric nucleosomes. Replaces conventional H3 in the nucleosome core of centromeric chromatin that serves as an assembly site for the inner kinetochore. The presence of CENPA subtly modifies the nucleosome structure and the way DNA is wrapped around the nucleosome and gives rise to protruding DNA ends that are less well-ordered and rigid compared to nucleosomes containing histone H3. May serve as an epigenetic mark that propagates centromere identity through replication and cell division. Required for recruitment and assembly of kinetochore proteins, and as a consequence required for progress through mitosis, chromosome segregation and cytokinesis. This Xenopus tropicalis (Western clawed frog) protein is Histone H3-like centromeric protein A (cenpa).